Here is a 469-residue protein sequence, read N- to C-terminus: Protopanaxadiol 6-hydroxylase (469 aa).

The chain crosses the membrane as a helical span at residues 3 to 23 (LFISSQLLLLLVFCLFLFWNF). A heme-binding site is contributed by cysteine 416.

The protein belongs to the cytochrome P450 family. Heme serves as cofactor. Accumulates ubiquitously in all organs of plants, including roots, stems and leaves.

Its subcellular location is the membrane. The enzyme catalyses (20S)-protopanaxadiol + reduced [NADPH--hemoprotein reductase] + O2 = (20S)-protopanaxatriol + oxidized [NADPH--hemoprotein reductase] + H2O + H(+). It functions in the pathway secondary metabolite biosynthesis; terpenoid biosynthesis. Its activity is regulated as follows. Activated by N,N'-dicyclohexylcarbodiimide (DCCD) thus leading to increased ginsenosides accumulation. Functionally, component of the dammarane-type triterpene saponins (e.g. PPT-type ginsenosides or panaxosides) biosynthetic pathway. Catalyzes the formation of protopanaxatriol from protopanaxadiol during ginsenoside biosynthesis, a class of tetracyclic triterpenoid saponins. This is Protopanaxadiol 6-hydroxylase from Panax ginseng (Korean ginseng).